Consider the following 284-residue polypeptide: uncharacterized protein (284 aa).

The signal sequence occupies residues 1–23 (MKRGCAIAVMICGLITSVSAASA).

This sequence belongs to the surface antigen msp4 family.

This is an uncharacterized protein from Brucella abortus (strain 2308).